A 241-amino-acid polypeptide reads, in one-letter code: 2-C-methyl-D-erythritol 4-phosphate cytidylyltransferase (241 aa).

The protein belongs to the IspD/TarI cytidylyltransferase family. IspD subfamily. In terms of assembly, homodimer.

The catalysed reaction is 2-C-methyl-D-erythritol 4-phosphate + CTP + H(+) = 4-CDP-2-C-methyl-D-erythritol + diphosphate. The protein operates within isoprenoid biosynthesis; isopentenyl diphosphate biosynthesis via DXP pathway; isopentenyl diphosphate from 1-deoxy-D-xylulose 5-phosphate: step 2/6. Functionally, catalyzes the formation of 4-diphosphocytidyl-2-C-methyl-D-erythritol from CTP and 2-C-methyl-D-erythritol 4-phosphate (MEP). In Yersinia pseudotuberculosis serotype IB (strain PB1/+), this protein is 2-C-methyl-D-erythritol 4-phosphate cytidylyltransferase.